We begin with the raw amino-acid sequence, 58 residues long: Dortoxin (58 aa).

Residues 3-58 (VPGNYPLDKDGNTYTCLKLGENKDCQKVCKLHGVQYGYCYAFECWCKEYLDDKDSV) enclose the LCN-type CS-alpha/beta domain. 3 disulfides stabilise this stretch: cysteine 18/cysteine 41, cysteine 27/cysteine 46, and cysteine 31/cysteine 48.

In terms of tissue distribution, expressed by the venom gland.

The protein localises to the secreted. Functionally, binds to sodium channels (Nav) and affects the channel activation process. In mice, causes hyperactivity that persists until death. The polypeptide is Dortoxin (Parabuthus transvaalicus (Transvaal thick-tailed scorpion)).